The sequence spans 638 residues: Growth hormone receptor (638 aa).

An N-terminal signal peptide occupies residues 1-18 (MDLWQLLLTLAVAGSGNA). Over 19–264 (VSGSEATPAI…SPFACEEDFQ (246 aa)) the chain is Extracellular. Intrachain disulfides connect C56–C66 and C101–C112. N115 carries an N-linked (GlcNAc...) asparagine glycan. A disulfide bridge connects residues C126 and C140. The region spanning 151–254 (PPIGLNWTLL…EVLYVALPQM (104 aa)) is the Fibronectin type-III domain. 3 N-linked (GlcNAc...) asparagine glycosylation sites follow: N156, N161, and N200. The short motif at 240-244 (YGEFS) is the WSXWS motif element. Residues 265 to 288 (FPWFLIIIFGIFGLTMILFLFIFS) traverse the membrane as a helical segment. At 289 to 638 (KQQRIKMLIL…STDQLNKIMP (350 aa)) the chain is on the cytoplasmic side. Positions 294 to 379 (KMLILPPVPV…HEKSLNILGA (86 aa)) are required for JAK2 binding. A Box 1 motif motif is present at residues 297-305 (ILPPVPVPK). The UbE motif signature appears at 340–349 (DSWVEFIELD). Position 341 is a phosphoserine (S341). Over residues 429-446 (KNQSNSPSTDTAPNTQQP) the composition is skewed to polar residues. Residues 429–448 (KNQSNSPSTDTAPNTQQPGV) are disordered. 2 positions are modified to phosphotyrosine: Y487 and Y595.

The protein belongs to the type I cytokine receptor family. Type 1 subfamily. As to quaternary structure, on growth hormone (GH) binding, forms homodimers and binds JAK2 via a box 1-containing domain. In terms of processing, the soluble form (GHBP) is produced by phorbol ester-promoted proteolytic cleavage at the cell surface (shedding) by ADAM17/TACE. Shedding is inhibited by growth hormone (GH) binding to the receptor probably due to a conformational change in GHR rendering the receptor inaccessible to ADAM17. On GH binding, phosphorylated on tyrosine residues in the cytoplasmic domain by JAK2. Post-translationally, ubiquitinated by the ECS(SOCS2) complex following ligand-binding and phosphorylation by JAK2, leading to its degradation by the proteasome. Regulation by the ECS(SOCS2) complex acts as a negative feedback loop of growth hormone receptor signaling. Ubiquitination is not sufficient for GHR internalization.

The protein localises to the cell membrane. It is found in the secreted. Its function is as follows. Receptor for pituitary gland growth hormone (GH1) involved in regulating postnatal body growth. On ligand binding, couples to the JAK2/STAT5 pathway. In terms of biological role, the soluble form (GHBP) acts as a reservoir of growth hormone in plasma and may be a modulator/inhibitor of GH signaling. This is Growth hormone receptor (GHR) from Ailuropoda melanoleuca (Giant panda).